The following is a 464-amino-acid chain: 3-isopropylmalate dehydratase large subunit (464 aa).

Residues Cys-345, Cys-405, and Cys-408 each contribute to the [4Fe-4S] cluster site.

The protein belongs to the aconitase/IPM isomerase family. LeuC type 1 subfamily. In terms of assembly, heterodimer of LeuC and LeuD. It depends on [4Fe-4S] cluster as a cofactor.

It carries out the reaction (2R,3S)-3-isopropylmalate = (2S)-2-isopropylmalate. Its pathway is amino-acid biosynthesis; L-leucine biosynthesis; L-leucine from 3-methyl-2-oxobutanoate: step 2/4. Its function is as follows. Catalyzes the isomerization between 2-isopropylmalate and 3-isopropylmalate, via the formation of 2-isopropylmaleate. This Flavobacterium johnsoniae (strain ATCC 17061 / DSM 2064 / JCM 8514 / BCRC 14874 / CCUG 350202 / NBRC 14942 / NCIMB 11054 / UW101) (Cytophaga johnsonae) protein is 3-isopropylmalate dehydratase large subunit.